The primary structure comprises 223 residues: Noggin-3 (223 aa).

Positions 1–23 (MDNIPYFLATVLIFSLGFRIEEG) are cleaved as a signal peptide. N-linked (GlcNAc...) asparagine glycans are attached at residues N60 and N93.

Belongs to the noggin family. In terms of assembly, homodimer; disulfide-linked.

Its subcellular location is the secreted. In terms of biological role, may function as an inhibitor of bone morphogenetic proteins (BMP) signaling during later stages of development including late phases of dorsoventral patterning, to refine the early pattern set up by the interaction of chordino and BMP2/4. Not involved in organizer function or early phases of dorsoventral pattern formation. This Danio rerio (Zebrafish) protein is Noggin-3 (nog3).